Consider the following 191-residue polypeptide: Threonylcarbamoyl-AMP synthase (191 aa).

Positions 10–191 (VPKLTQCVRT…DLYTDAIIRA (182 aa)) constitute a YrdC-like domain.

Belongs to the SUA5 family. TsaC subfamily.

Its subcellular location is the cytoplasm. It carries out the reaction L-threonine + hydrogencarbonate + ATP = L-threonylcarbamoyladenylate + diphosphate + H2O. Required for the formation of a threonylcarbamoyl group on adenosine at position 37 (t(6)A37) in tRNAs that read codons beginning with adenine. Catalyzes the conversion of L-threonine, HCO(3)(-)/CO(2) and ATP to give threonylcarbamoyl-AMP (TC-AMP) as the acyladenylate intermediate, with the release of diphosphate. This is Threonylcarbamoyl-AMP synthase from Saccharophagus degradans (strain 2-40 / ATCC 43961 / DSM 17024).